We begin with the raw amino-acid sequence, 459 residues long: Serine/threonine-protein kinase 12 (459 aa).

The interval 1–30 is disordered; sequence MEEDYQQPRFTIGRQSSMAPEKIPEPSVHS. 3 ANK repeats span residues 42-71, 75-104, and 108-137; these read DGGVRLMYLANEGDIEGIKELIDSGIDANY, DDRTALHVAACQGLKDVVELLLDRKAEVDP, and WGSTPFADAIFYKNIDVIKILEIHGAKHPM. The 316-residue stretch at 102 to 417 folds into the Protein kinase domain; that stretch reads VDPKDRWGST…EIIKRLESIL (316 aa). Residues 108 to 116 and lysine 184 each bind ATP; that span reads WGSTPFADA. The active-site Proton acceptor is the aspartate 281.

It belongs to the protein kinase superfamily. Ser/Thr protein kinase family. In terms of assembly, interacts with BLUS1, PHOT1 and PHOT2. As to expression, accumulates in leaves, stems, petioles and roots, especially in guard cells.

It localises to the cytoplasm. The protein resides in the cytosol. It carries out the reaction L-seryl-[protein] + ATP = O-phospho-L-seryl-[protein] + ADP + H(+). The enzyme catalyses L-threonyl-[protein] + ATP = O-phospho-L-threonyl-[protein] + ADP + H(+). In terms of biological role, serine/threonine protein kinase that phosphorylates proteins on serine and threonine residues. Mediates blue light-dependent stomatal opening in guard cells by promoting plasma membrane-type ATPases (AHA1 and AHA2) phosphorylation. The chain is Serine/threonine-protein kinase 12 from Arabidopsis thaliana (Mouse-ear cress).